Consider the following 418-residue polypeptide: Gamma-glutamyl phosphate reductase (418 aa).

The protein belongs to the gamma-glutamyl phosphate reductase family.

It localises to the cytoplasm. It carries out the reaction L-glutamate 5-semialdehyde + phosphate + NADP(+) = L-glutamyl 5-phosphate + NADPH + H(+). It functions in the pathway amino-acid biosynthesis; L-proline biosynthesis; L-glutamate 5-semialdehyde from L-glutamate: step 2/2. Catalyzes the NADPH-dependent reduction of L-glutamate 5-phosphate into L-glutamate 5-semialdehyde and phosphate. The product spontaneously undergoes cyclization to form 1-pyrroline-5-carboxylate. In Marinobacter nauticus (strain ATCC 700491 / DSM 11845 / VT8) (Marinobacter aquaeolei), this protein is Gamma-glutamyl phosphate reductase.